Reading from the N-terminus, the 98-residue chain is Small ribosomal subunit protein bTHXm (98 aa).

Residues 1 to 35 (MAAMQWCGAMTRRIMMTQRTSAALNCSARYSSLSP) constitute a mitochondrion transit peptide. The segment at 52–71 (DKKTKKGKRFKGSYGNSRGK) is disordered. Basic residues predominate over residues 53–62 (KKTKKGKRFK).

Belongs to the bacterial ribosomal protein bTHX family. As to quaternary structure, component of the mitochondrial ribosome small subunit.

Its subcellular location is the mitochondrion. The protein is Small ribosomal subunit protein bTHXm of Arabidopsis thaliana (Mouse-ear cress).